A 372-amino-acid chain; its full sequence is Hydrogenase-1 small chain (372 aa).

Residues 1 to 45 constitute a signal peptide (tat-type signal); that stretch reads MNNEETFYQAMRRQGVTRRSFLKYCSLAATSLGLGAGMAPKIAWA. At 46–326 the chain is on the periplasmic side; it reads LENKPRIPVV…QMGTHSTADT (281 aa). 8 residues coordinate [4Fe-4S] cluster: C62, C65, C160, C194, H232, C235, C260, and C266. Residues C275, C294, and C297 each contribute to the [3Fe-4S] cluster site. A helical transmembrane segment spans residues 327-347; it reads VGLTALGVVAAAVGVHAVASA. The disordered stretch occupies residues 347 to 372; it reads AVDQRRRHNQQPTETEHQPGNEDKQA. The Cytoplasmic portion of the chain corresponds to 348 to 372; sequence VDQRRRHNQQPTETEHQPGNEDKQA. The span at 360-372 shows a compositional bias: basic and acidic residues; that stretch reads ETEHQPGNEDKQA.

It belongs to the [NiFe]/[NiFeSe] hydrogenase small subunit family. In terms of assembly, heterodimer of a large and a small subunit. The cofactor is [4Fe-4S] cluster. Requires [3Fe-4S] cluster as cofactor. Predicted to be exported by the Tat system. The position of the signal peptide cleavage has not been experimentally proven.

Its subcellular location is the cell inner membrane. It carries out the reaction H2 + A = AH2. Functionally, this is one of three E.coli hydrogenases synthesized in response to different physiological conditions. HYD1 is believed to have a role in hydrogen cycling during fermentative growth. This is Hydrogenase-1 small chain (hyaA) from Escherichia coli O6:H1 (strain CFT073 / ATCC 700928 / UPEC).